We begin with the raw amino-acid sequence, 109 residues long: Large ribosomal subunit protein uL22 (109 aa).

It belongs to the universal ribosomal protein uL22 family. Part of the 50S ribosomal subunit.

Its function is as follows. This protein binds specifically to 23S rRNA; its binding is stimulated by other ribosomal proteins, e.g. L4, L17, and L20. It is important during the early stages of 50S assembly. It makes multiple contacts with different domains of the 23S rRNA in the assembled 50S subunit and ribosome. The globular domain of the protein is located near the polypeptide exit tunnel on the outside of the subunit, while an extended beta-hairpin is found that lines the wall of the exit tunnel in the center of the 70S ribosome. The protein is Large ribosomal subunit protein uL22 of Herminiimonas arsenicoxydans.